The sequence spans 622 residues: Fanconi anemia group G protein (622 aa).

Ser7 is modified (phosphoserine). TPR repeat units follow at residues 246 to 279, 344 to 377, 453 to 486, and 514 to 547; these read VQVY…GSAW, SQTK…LLDS, SATH…LFRA, and AAAL…CPGN.

In terms of assembly, belongs to the multisubunit FA complex composed of FANCA, FANCB, FANCC, FANCE, FANCF, FANCG, FANCL/PHF9 and FANCM. The complex is not found in FA patients. In complex with FANCF, FANCA and FANCL, but not with FANCC, nor FANCE, interacts with HES1; this interaction may be essential for the stability and nuclear localization of FA core complex proteins. The complex with FANCC and FANCG may also include EIF2AK2 and HSP70. When phosphorylated at Ser-7, forms a complex with BRCA2, FANCD2 and XRCC3. In terms of tissue distribution, highly expressed in testis and thymus. Found in lymphoblasts.

The protein resides in the nucleus. Its subcellular location is the cytoplasm. DNA repair protein that may operate in a postreplication repair or a cell cycle checkpoint function. May be implicated in interstrand DNA cross-link repair and in the maintenance of normal chromosome stability. Candidate tumor suppressor gene. The chain is Fanconi anemia group G protein (FANCG) from Homo sapiens (Human).